A 685-amino-acid chain; its full sequence is Probable inactive leucine-rich repeat receptor-like protein kinase At1g66830 (685 aa).

The first 21 residues, 1-21, serve as a signal peptide directing secretion; that stretch reads MSQLFLILCFILTHFFAIATS. Topologically, residues 22–305 are extracellular; it reads LNDQGLALLS…RRANHHSRLC (284 aa). N-linked (GlcNAc...) asparagine glycans are attached at residues N38 and N48. 8 LRR repeats span residues 65-89, 90-113, 115-136, 137-161, 162-185, 186-210, 212-234, and 235-260; these read DMRVVSIRLPNKRLSGSLDPSIGSL, LSLRHINLRDNDFQGKLPVELFGL, GLQSLVLSGNSFSGFVPEEIGS, LKSLMTLDLSENSFNGSISLSLIPC, KKLKTLVLSKNSFSGDLPTGLGSN, LVHLRTLNLSFNRLTGTIPEDVGSL, NLKGTLDLSHNFFSGMIPTSLGN, and LPELLYVDLSYNNLSGPIPKFNVLLN. N151 carries N-linked (GlcNAc...) asparagine glycosylation. N193 carries N-linked (GlcNAc...) asparagine glycosylation. A glycan (N-linked (GlcNAc...) asparagine) is linked at N247. Residues 306–326 form a helical membrane-spanning segment; it reads IILTATGGTVAGIIFLASLFI. Residues 327-685 lie on the Cytoplasmic side of the membrane; that stretch reads YYLRKASARA…ESFEKLVTSI (359 aa). One can recognise a Protein kinase domain in the interval 397–682; sequence KASAFLLGKS…SVLESFEKLV (286 aa). S399, S480, and S590 each carry phosphoserine.

The protein belongs to the protein kinase superfamily. Ser/Thr protein kinase family.

It is found in the cell membrane. The chain is Probable inactive leucine-rich repeat receptor-like protein kinase At1g66830 from Arabidopsis thaliana (Mouse-ear cress).